A 339-amino-acid chain; its full sequence is Lipopolysaccharide glucosyltransferase WaaO (339 aa).

Residues 34-39 (GTDKNF) and 131-132 (DA) each bind UDP. Residues Asp131 and Asp133 each coordinate Mg(2+). Short sequence motifs (DXD) lie at residues 131 to 133 (DAD) and 220 to 222 (DQD). His265 is a binding site for Mg(2+). 265–271 (HYIGPTK) is a UDP binding site.

The protein belongs to the glycosyltransferase 8 family. Requires Mg(2+) as cofactor.

It catalyses the reaction UDP-glucose + lipopolysaccharide = UDP + alpha-D-glucosyl-lipopolysaccharide.. The enzyme catalyses alpha-D-Gal-(1-&gt;6)-alpha-D-Glc-(1-&gt;3)-[L-alpha-D-Hep-(1-&gt;7)]-4-O-PO3(2-)-L-alpha-D-Hep-(1-&gt;3)-4-O-PO3(2-)-L-alpha-D-Hep-(1-&gt;5)-[alpha-Kdo-(2-&gt;4)]-alpha-Kdo-(2-&gt;6)-lipid A + UDP-alpha-D-glucose = alpha-D-Glc-(1-&gt;3)-[alpha-D-Gal-(1-&gt;6)]-alpha-D-Glc-(1-&gt;3)-[L-alpha-D-Hep-(1-&gt;7)]-4-O-PO3(2-)-L-alpha-D-Hep-(1-&gt;3)-4-O-PO3(2-)-L-alpha-D-Hep-(1-&gt;5)-[alpha-Kdo-(2-&gt;4)]-alpha-Kdo-(2-&gt;6)-lipid A + UDP + H(+). The protein operates within bacterial outer membrane biogenesis; LPS core biosynthesis. Functionally, glucosyltransferase involved in the biosynthesis of the core oligosaccharide region of lipopolysaccharide (LPS). Catalyzes the addition of a second glucose (glucose II) to the first outer-core glucose (glucose I). In vitro, can add multiple glucose residues to its lipid acceptor. Activity does not require the branched galactose added by WaaB, but it is higher in the presence of this branched galactose. In the absence of a lipid acceptor, can hydrolyze UDP-glucose, but not UDP-galactose. This is Lipopolysaccharide glucosyltransferase WaaO from Escherichia coli (strain K12).